The chain runs to 425 residues: Serine--tRNA ligase 1 (425 aa).

L-serine is bound at residue 230-232 (TSE). Residues 261 to 263 (RRE) and Val277 contribute to the ATP site. Position 284 (Glu284) interacts with L-serine. 348–351 (ELTS) lines the ATP pocket. Thr382 provides a ligand contact to L-serine.

This sequence belongs to the class-II aminoacyl-tRNA synthetase family. Type-1 seryl-tRNA synthetase subfamily. As to quaternary structure, homodimer. The tRNA molecule binds across the dimer.

The protein localises to the cytoplasm. The enzyme catalyses tRNA(Ser) + L-serine + ATP = L-seryl-tRNA(Ser) + AMP + diphosphate + H(+). The catalysed reaction is tRNA(Sec) + L-serine + ATP = L-seryl-tRNA(Sec) + AMP + diphosphate + H(+). It participates in aminoacyl-tRNA biosynthesis; selenocysteinyl-tRNA(Sec) biosynthesis; L-seryl-tRNA(Sec) from L-serine and tRNA(Sec): step 1/1. In terms of biological role, catalyzes the attachment of serine to tRNA(Ser). Is also able to aminoacylate tRNA(Sec) with serine, to form the misacylated tRNA L-seryl-tRNA(Sec), which will be further converted into selenocysteinyl-tRNA(Sec). The protein is Serine--tRNA ligase 1 of Streptomyces avermitilis (strain ATCC 31267 / DSM 46492 / JCM 5070 / NBRC 14893 / NCIMB 12804 / NRRL 8165 / MA-4680).